The following is a 197-amino-acid chain: dTTP/UTP pyrophosphatase (197 aa).

D70 (proton acceptor) is an active-site residue.

This sequence belongs to the Maf family. YhdE subfamily. Requires a divalent metal cation as cofactor.

The protein resides in the cytoplasm. The catalysed reaction is dTTP + H2O = dTMP + diphosphate + H(+). The enzyme catalyses UTP + H2O = UMP + diphosphate + H(+). Functionally, nucleoside triphosphate pyrophosphatase that hydrolyzes dTTP and UTP. May have a dual role in cell division arrest and in preventing the incorporation of modified nucleotides into cellular nucleic acids. The sequence is that of dTTP/UTP pyrophosphatase (yceF2) from Escherichia coli O6:K15:H31 (strain 536 / UPEC).